We begin with the raw amino-acid sequence, 142 residues long: Peptide methionine sulfoxide reductase MsrB (142 aa).

A MsrB domain is found at Ile-2 to Tyr-125. Residue Cys-114 is the Nucleophile of the active site.

The protein belongs to the MsrB Met sulfoxide reductase family.

It catalyses the reaction L-methionyl-[protein] + [thioredoxin]-disulfide + H2O = L-methionyl-(R)-S-oxide-[protein] + [thioredoxin]-dithiol. This is Peptide methionine sulfoxide reductase MsrB from Staphylococcus haemolyticus (strain JCSC1435).